An 863-amino-acid polypeptide reads, in one-letter code: Leucine--tRNA ligase (863 aa).

A 'HIGH' region motif is present at residues 42–52; it reads PYPSGRLHMGH. The 'KMSKS' region motif lies at 622–626; sequence KMSKS. ATP is bound at residue Lys625.

Belongs to the class-I aminoacyl-tRNA synthetase family.

It is found in the cytoplasm. It carries out the reaction tRNA(Leu) + L-leucine + ATP = L-leucyl-tRNA(Leu) + AMP + diphosphate. This chain is Leucine--tRNA ligase, found in Shewanella sediminis (strain HAW-EB3).